Here is a 208-residue protein sequence, read N- to C-terminus: MGVTVVSHPLVKHKLTIMRKKETSTASFRRLLKEISLLLCYEVTRNLELTTMSIETPLMPMEAPVLEGKKLVFASILRAGNGLLEGMLDLVPAARVAHIGLYRDHDTLQPIEYYFKAPEDIVNRLVIVVDPMLATANSAIAAIDKLKERGATNIRFLCLLAAPEGIERFTKAHPDVEVFTASIDECLDEKGYIVPGLGDAGDRMYGTK.

5-phospho-alpha-D-ribose 1-diphosphate contacts are provided by residues Arg78, Arg103, and 130–138 (DPMLATANS). Uracil contacts are provided by residues Ile193 and 198-200 (GDA). Residue Asp199 coordinates 5-phospho-alpha-D-ribose 1-diphosphate.

The protein belongs to the UPRTase family. Mg(2+) serves as cofactor.

The catalysed reaction is UMP + diphosphate = 5-phospho-alpha-D-ribose 1-diphosphate + uracil. Its pathway is pyrimidine metabolism; UMP biosynthesis via salvage pathway; UMP from uracil: step 1/1. Allosterically activated by GTP. Functionally, catalyzes the conversion of uracil and 5-phospho-alpha-D-ribose 1-diphosphate (PRPP) to UMP and diphosphate. The polypeptide is Uracil phosphoribosyltransferase (Brucella abortus biovar 1 (strain 9-941)).